We begin with the raw amino-acid sequence, 328 residues long: Methionyl-tRNA formyltransferase (328 aa).

110–113 (SNLP) is a binding site for (6S)-5,6,7,8-tetrahydrofolate.

Belongs to the Fmt family.

It catalyses the reaction L-methionyl-tRNA(fMet) + (6R)-10-formyltetrahydrofolate = N-formyl-L-methionyl-tRNA(fMet) + (6S)-5,6,7,8-tetrahydrofolate + H(+). In terms of biological role, attaches a formyl group to the free amino group of methionyl-tRNA(fMet). The formyl group appears to play a dual role in the initiator identity of N-formylmethionyl-tRNA by promoting its recognition by IF2 and preventing the misappropriation of this tRNA by the elongation apparatus. This is Methionyl-tRNA formyltransferase from Bifidobacterium longum (strain DJO10A).